Consider the following 297-residue polypeptide: 4-diphosphocytidyl-2-C-methyl-D-erythritol kinase (297 aa).

K6 is an active-site residue. 94–104 serves as a coordination point for ATP; the sequence is PVAGGMAGGSA. Residue D136 is part of the active site.

Belongs to the GHMP kinase family. IspE subfamily.

The enzyme catalyses 4-CDP-2-C-methyl-D-erythritol + ATP = 4-CDP-2-C-methyl-D-erythritol 2-phosphate + ADP + H(+). It participates in isoprenoid biosynthesis; isopentenyl diphosphate biosynthesis via DXP pathway; isopentenyl diphosphate from 1-deoxy-D-xylulose 5-phosphate: step 3/6. Functionally, catalyzes the phosphorylation of the position 2 hydroxy group of 4-diphosphocytidyl-2C-methyl-D-erythritol. This Nocardioides sp. (strain ATCC BAA-499 / JS614) protein is 4-diphosphocytidyl-2-C-methyl-D-erythritol kinase.